Here is a 319-residue protein sequence, read N- to C-terminus: N-acyl-aromatic-L-amino acid amidohydrolase (carboxylate-forming) (319 aa).

The hydrolytic domain stretch occupies residues Met-1–Asn-210. 2 residues coordinate Zn(2+): His-21 and Glu-24. Residues Arg-63 and Asn-70–Arg-71 each bind substrate. His-116 contributes to the Zn(2+) binding site. The substrate site is built by Glu-178 and Tyr-288. The segment at Gln-211–Ala-318 is shielding domain.

This sequence belongs to the AspA/AstE family. Aspartoacylase subfamily. In terms of assembly, exists as a mixture of homodimers and homotetramer, both catalytically active. As to quaternary structure, (Microbial infection) Interacts with hepatitis C virus/HCV core protein. Zn(2+) serves as cofactor.

The protein localises to the apical cell membrane. Its subcellular location is the cytoplasm. It carries out the reaction an N-acyl-aromatic L-alpha-amino acid + H2O = an aromatic L-alpha-amino acid + a carboxylate. The enzyme catalyses an N-acetyl-L-cysteine-S-conjugate + H2O = an S-substituted L-cysteine + acetate. Plays an important role in deacetylating mercapturic acids in kidney proximal tubules. Also acts on N-acetyl-aromatic amino acids. In Homo sapiens (Human), this protein is N-acyl-aromatic-L-amino acid amidohydrolase (carboxylate-forming) (ACY3).